A 264-amino-acid polypeptide reads, in one-letter code: Regulatory protein RecX (264 aa).

The protein belongs to the RecX family.

Its subcellular location is the cytoplasm. Functionally, negatively modulates RecA activity. This Bacillus subtilis (strain 168) protein is Regulatory protein RecX.